The chain runs to 356 residues: GTPase Obg (356 aa).

The 159-residue stretch at 2–160 (ESFVDEVAIE…KFLRLSLKLL (159 aa)) folds into the Obg domain. One can recognise an OBG-type G domain in the interval 161-329 (ADVGIVGLPN…LLENMDEVFF (169 aa)). GTP-binding positions include 167–174 (GLPNAGKS), 192–196 (FTTLS), 215–218 (DIPG), 282–285 (NKID), and 310–312 (SAD). Residues Ser-174 and Thr-194 each contribute to the Mg(2+) site.

It belongs to the TRAFAC class OBG-HflX-like GTPase superfamily. OBG GTPase family. As to quaternary structure, monomer. Mg(2+) is required as a cofactor.

The protein localises to the cytoplasm. Its function is as follows. An essential GTPase which binds GTP, GDP and possibly (p)ppGpp with moderate affinity, with high nucleotide exchange rates and a fairly low GTP hydrolysis rate. Plays a role in control of the cell cycle, stress response, ribosome biogenesis and in those bacteria that undergo differentiation, in morphogenesis control. This Leptospira interrogans serogroup Icterohaemorrhagiae serovar copenhageni (strain Fiocruz L1-130) protein is GTPase Obg.